Here is a 322-residue protein sequence, read N- to C-terminus: NADH-quinone oxidoreductase subunit H (322 aa).

8 consecutive transmembrane segments (helical) span residues 14 to 34 (IFMH…YMSF), 81 to 101 (YIFV…IPVI), 114 to 134 (VGVL…LLAG), 149 to 169 (SIAQ…GIVA), 186 to 206 (LWNI…GMAL), 237 to 257 (FFIS…TLFF), 265 to 285 (FPPV…FVLI), and 302 to 322 (WKFL…YILI).

It belongs to the complex I subunit 1 family. In terms of assembly, NDH-1 is composed of 13 different subunits. Subunits NuoA, H, J, K, L, M, N constitute the membrane sector of the complex.

It is found in the cell inner membrane. The catalysed reaction is a quinone + NADH + 5 H(+)(in) = a quinol + NAD(+) + 4 H(+)(out). NDH-1 shuttles electrons from NADH, via FMN and iron-sulfur (Fe-S) centers, to quinones in the respiratory chain. The immediate electron acceptor for the enzyme in this species is believed to be ubiquinone. Couples the redox reaction to proton translocation (for every two electrons transferred, four hydrogen ions are translocated across the cytoplasmic membrane), and thus conserves the redox energy in a proton gradient. This subunit may bind ubiquinone. This is NADH-quinone oxidoreductase subunit H from Blochmanniella floridana.